Reading from the N-terminus, the 315-residue chain is Archaeosortase A (315 aa).

Transmembrane regions (helical) follow at residues 12–32 (VIPY…AGVA), 47–67 (AGAW…FAFV), 74–94 (TVLI…VFAG), 173–193 (VVFE…IAAV), 204–224 (IALS…FIAL), 227–247 (GYQW…FGLT), and 260–280 (VLAQ…IARW). Cys-177 functions as the Acyl-thioester intermediate in the catalytic mechanism. Residue Arg-218 is the Proton donor of the active site.

This sequence belongs to the exosortase/archaeosortase family. Archaeosortase A subfamily.

The protein localises to the cell membrane. Transpeptidase that recognizes and modifies its substrate by proteolytic cleavage of a sorting signal. Following cleavage, a covalent intermediate is formed via a thioester bond between the archaeosortase and its substrate, which is then transferred and covalently attached to the cell membrane. This Natronomonas pharaonis (strain ATCC 35678 / DSM 2160 / CIP 103997 / JCM 8858 / NBRC 14720 / NCIMB 2260 / Gabara) (Halobacterium pharaonis) protein is Archaeosortase A.